Reading from the N-terminus, the 134-residue chain is uncharacterized protein (134 aa).

One can recognise an HTH tetR-type domain in the interval 10 to 70 (KETRQRIIDA…AVLASRQHPL (61 aa)). Positions 33–52 (TLDQIARKAGVTRGAVYWHF) form a DNA-binding region, H-T-H motif.

Unknown, does not seem to be involved in regulation of the ttgGHI or ttgVW operons. This is an uncharacterized protein from Pseudomonas putida (strain DOT-T1E).